We begin with the raw amino-acid sequence, 249 residues long: Oxidoreductase asL5 (249 aa).

Positions 21, 45, 90, 155, 159, 188, and 190 each coordinate NADP(+). Tyrosine 155 functions as the Proton acceptor in the catalytic mechanism. Residue lysine 159 is the Lowers pKa of active site Tyr of the active site.

Belongs to the short-chain dehydrogenases/reductases (SDR) family.

Functionally, oxidoreductase; part of the gene cluster that mediates the biosynthesis of xenovulene A, an unusual meroterpenoid that has potent inhibitory effects on the human gamma-aminobutyrate A (GABAA) benzodiazepine receptor. The first step of xenovulene A biosynthesis is the biosynthesis of 3-methylorcinaldehyde performed by the non-reducing polyketide synthase aspks1. The salicylate hydroxylase asL1 then catalyzes the oxidative dearomatization of 3-methylorcinaldehyde to yield a dearomatized hydroxycyclohexadione. The 2-oxoglutarate-dependent dioxygenase asL3 further catalyzes the oxidative ring expansion to provide the first tropolone metabolite. The cytochrome P450 monooxygenase asR2 allows the synthesis of tropolone hemiacetal. In parallel, a previously unrecognised class of terpene cyclase, asR6, produces alpha-humulene from farnesylpyrophosphate (FPP). The putative Diels-Alderase asR5 probably catalyzes the formation of the tropolone-humulene skeleton by linking humulene and the polyketide moiety. Oxidative-ring contractions catalyzed by asL4 and asL6 then processively remove carbon atoms from the polyketide to yield xenovulene A. The sequence is that of Oxidoreductase asL5 from Sarocladium schorii (Acremonium strictum (strain IMI 501407)).